Here is a 1220-residue protein sequence, read N- to C-terminus: Polycomb protein Sfmbt (1220 aa).

The FCS-type zinc-finger motif lies at 322 to 357 (PIQKDGMAVCKRCGAIGVKHTFYTKSRRFCSMACAR). Zn(2+) is bound by residues C331, C334, C351, and C355. Disordered stretches follow at residues 371-399 (GDQA…QSQS) and 464-483 (DATA…SYLS). Polar residues predominate over residues 473–482 (EGASTPNSYL). MBT repeat units follow at residues 536–647 (YDWL…LIPP), 655–753 (KDWK…LAAP), 761–871 (LAGR…VTPP), and 879–975 (FTWE…LEGP). Disordered regions lie at residues 976-1024 (PRVA…IALK) and 1050-1092 (NNQP…AGSG). The segment covering 991-1000 (KIQRKRKPKK) has biased composition (basic residues). Positions 1052–1068 (QPEEEGDEEDPDADGDG) are enriched in acidic residues. Polar residues predominate over residues 1071 to 1082 (STSHISEQSTTQ). Over residues 1083 to 1092 (SSSDLIAGSG) the composition is skewed to low complexity. The SAM domain occupies 1140-1203 (WNVYDVSQFL…SDLIAQLKCK (64 aa)).

In terms of assembly, interacts with pho as a component of the pho-repressive complex (PhoRC).

The protein localises to the nucleus. Functionally, polycomb group (PcG) protein that binds to the Polycomb response elements (PREs) found in the regulatory regions of many genes. PcG proteins act by forming multiprotein complexes, which are required to maintain the transcriptionally repressive state of homeotic genes throughout development. PcG proteins are not required to initiate repression, but to maintain it during later stages of development. They probably act via the methylation of histones, rendering chromatin heritably changed in its expressibility. Necessary but not sufficient to recruit a functional PcG repressive complex that represses target genes, suggesting that the recruitment of the distinct PRC1 complex is also required to allow a subsequent repression. In Drosophila melanogaster (Fruit fly), this protein is Polycomb protein Sfmbt.